The following is a 256-amino-acid chain: Protein FixA (256 aa).

Belongs to the ETF beta-subunit/FixA family. Heterodimer of FixA and FixB.

It participates in amine and polyamine metabolism; carnitine metabolism. In terms of biological role, required for anaerobic carnitine reduction. May bring reductant to CaiA. The protein is Protein FixA of Salmonella paratyphi A (strain ATCC 9150 / SARB42).